The sequence spans 347 residues: Dual-specificity RNA methyltransferase RlmN (347 aa).

Residue glutamate 93 is the Proton acceptor of the active site. The region spanning 99–327 (DEGRNTLCIS…VITRDSRGSD (229 aa)) is the Radical SAM core domain. Cysteine 106 and cysteine 332 form a disulfide bridge. [4Fe-4S] cluster is bound by residues cysteine 113, cysteine 117, and cysteine 120. S-adenosyl-L-methionine is bound by residues 158 to 159 (GE), serine 190, 213 to 215 (SLN), and asparagine 289. Cysteine 332 serves as the catalytic S-methylcysteine intermediate.

The protein belongs to the radical SAM superfamily. RlmN family. [4Fe-4S] cluster serves as cofactor.

Its subcellular location is the cytoplasm. The enzyme catalyses adenosine(2503) in 23S rRNA + 2 reduced [2Fe-2S]-[ferredoxin] + 2 S-adenosyl-L-methionine = 2-methyladenosine(2503) in 23S rRNA + 5'-deoxyadenosine + L-methionine + 2 oxidized [2Fe-2S]-[ferredoxin] + S-adenosyl-L-homocysteine. It carries out the reaction adenosine(37) in tRNA + 2 reduced [2Fe-2S]-[ferredoxin] + 2 S-adenosyl-L-methionine = 2-methyladenosine(37) in tRNA + 5'-deoxyadenosine + L-methionine + 2 oxidized [2Fe-2S]-[ferredoxin] + S-adenosyl-L-homocysteine. In terms of biological role, specifically methylates position 2 of adenine 2503 in 23S rRNA and position 2 of adenine 37 in tRNAs. m2A2503 modification seems to play a crucial role in the proofreading step occurring at the peptidyl transferase center and thus would serve to optimize ribosomal fidelity. The sequence is that of Dual-specificity RNA methyltransferase RlmN from Pelobacter propionicus (strain DSM 2379 / NBRC 103807 / OttBd1).